A 142-amino-acid polypeptide reads, in one-letter code: Hemoglobin subunit alpha-2 (142 aa).

A Globin domain is found at 2 to 142; sequence VLSPADKTNV…VSTVLTSKYR (141 aa). Residue histidine 59 participates in O2 binding. Residue histidine 88 coordinates heme b.

This sequence belongs to the globin family. In terms of assembly, heterotetramer of two alpha chains and two beta chains. As to expression, red blood cells.

Functionally, involved in oxygen transport from the lung to the various peripheral tissues. In terms of biological role, hemopressin acts as an antagonist peptide of the cannabinoid receptor CNR1. Hemopressin-binding efficiently blocks cannabinoid receptor CNR1 and subsequent signaling. This Hylobates lar (Lar gibbon) protein is Hemoglobin subunit alpha-2 (HBA2).